A 180-amino-acid polypeptide reads, in one-letter code: ATP synthase subunit delta (180 aa).

Belongs to the ATPase delta chain family. In terms of assembly, F-type ATPases have 2 components, F(1) - the catalytic core - and F(0) - the membrane proton channel. F(1) has five subunits: alpha(3), beta(3), gamma(1), delta(1), epsilon(1). F(0) has three main subunits: a(1), b(2) and c(10-14). The alpha and beta chains form an alternating ring which encloses part of the gamma chain. F(1) is attached to F(0) by a central stalk formed by the gamma and epsilon chains, while a peripheral stalk is formed by the delta and b chains.

The protein resides in the cell membrane. In terms of biological role, f(1)F(0) ATP synthase produces ATP from ADP in the presence of a proton or sodium gradient. F-type ATPases consist of two structural domains, F(1) containing the extramembraneous catalytic core and F(0) containing the membrane proton channel, linked together by a central stalk and a peripheral stalk. During catalysis, ATP synthesis in the catalytic domain of F(1) is coupled via a rotary mechanism of the central stalk subunits to proton translocation. Its function is as follows. This protein is part of the stalk that links CF(0) to CF(1). It either transmits conformational changes from CF(0) to CF(1) or is implicated in proton conduction. This is ATP synthase subunit delta from Leuconostoc mesenteroides subsp. mesenteroides (strain ATCC 8293 / DSM 20343 / BCRC 11652 / CCM 1803 / JCM 6124 / NCDO 523 / NBRC 100496 / NCIMB 8023 / NCTC 12954 / NRRL B-1118 / 37Y).